We begin with the raw amino-acid sequence, 448 residues long: Glucose-6-phosphate isomerase (448 aa).

The active-site Proton donor is Glu-290. Residues His-311 and Lys-425 contribute to the active site.

This sequence belongs to the GPI family.

Its subcellular location is the cytoplasm. It catalyses the reaction alpha-D-glucose 6-phosphate = beta-D-fructose 6-phosphate. It functions in the pathway carbohydrate biosynthesis; gluconeogenesis. It participates in carbohydrate degradation; glycolysis; D-glyceraldehyde 3-phosphate and glycerone phosphate from D-glucose: step 2/4. Catalyzes the reversible isomerization of glucose-6-phosphate to fructose-6-phosphate. The polypeptide is Glucose-6-phosphate isomerase (Acetivibrio thermocellus (strain ATCC 27405 / DSM 1237 / JCM 9322 / NBRC 103400 / NCIMB 10682 / NRRL B-4536 / VPI 7372) (Clostridium thermocellum)).